Reading from the N-terminus, the 264-residue chain is Cell division protein FtsQ (264 aa).

Positions 1–24 (MAGPTTAERGARQQESSGPPRVRR) are disordered. Residues 1–32 (MAGPTTAERGARQQESSGPPRVRRFRPPRLRT) are Cytoplasmic-facing. Residues 33 to 53 (IIILAVALVLVAGGTVWVLYG) traverse the membrane as a helical segment. Residues 54 to 264 (SNWTRLERVS…VATAPASSGS (211 aa)) lie on the Extracellular side of the membrane. The region spanning 57-126 (TRLERVSVSG…HGIGLKVTER (70 aa)) is the POTRA domain.

The protein belongs to the FtsQ/DivIB family. FtsQ subfamily.

The protein resides in the cell membrane. Its function is as follows. Essential cell division protein. This Streptomyces coelicolor (strain ATCC BAA-471 / A3(2) / M145) protein is Cell division protein FtsQ.